The primary structure comprises 304 residues: Heme A synthase (304 aa).

Over 1-8 (MFNKRNLK) the chain is Cytoplasmic. A helical membrane pass occupies residues 9–29 (WLSVLATIIMAFVQLGGALVT). The Extracellular segment spans residues 30–67 (KTGSEDGCGSSWPLCHGALLPQNLPIDTIIELSHRAVS). An intrachain disulfide couples Cys-37 to Cys-44. Residue Glu-60 is part of the active site. A heme o-binding site is contributed by His-63. Residues 68-88 (GLSLIVVLWLAITAWKHIGYI) traverse the membrane as a helical segment. Topologically, residues 89–93 (REVKP) are cytoplasmic. Residues 94–114 (LAIISIAFLLVQALIGAAAVI) traverse the membrane as a helical segment. The Extracellular portion of the chain corresponds to 115–123 (WQQNSYVLA). Residues 124-144 (LHFGISLISFSSVFVLMLIIF) traverse the membrane as a helical segment. Heme o is bound at residue His-125. Over 145 to 163 (EVDKKYEADELYIRKPLRR) the chain is Cytoplasmic. A helical transmembrane segment spans residues 164-184 (LTWIMTGIVYLTIYTGALVRH). The Extracellular segment spans residues 185–215 (AKASLAYGGWPLPFHDIIPHTEQDWVQFAHR). His-214 provides a ligand contact to heme b. Residues 216 to 236 (GMAFITFFWIMITFIHAVKNY) traverse the membrane as a helical segment. Over 237 to 244 (SENRTIRY) the chain is Cytoplasmic. A helical membrane pass occupies residues 245-265 (GYTTAFILIILQVITGALSVM). Over 266 to 270 (TNVNL) the chain is Extracellular. Residues 271–291 (FIALLHALFITILFGMIAYFI) form a helical membrane-spanning segment. His-276 provides a ligand contact to heme b. Topologically, residues 292–304 (MLMLRTIRSEKIK) are cytoplasmic.

This sequence belongs to the COX15/CtaA family. Type 1 subfamily. In terms of assembly, interacts with CtaB. Heme b serves as cofactor.

The protein resides in the cell membrane. The catalysed reaction is Fe(II)-heme o + 2 A + H2O = Fe(II)-heme a + 2 AH2. The protein operates within porphyrin-containing compound metabolism; heme A biosynthesis; heme A from heme O: step 1/1. Functionally, catalyzes the conversion of heme O to heme A by two successive hydroxylations of the methyl group at C8. The first hydroxylation forms heme I, the second hydroxylation results in an unstable dihydroxymethyl group, which spontaneously dehydrates, resulting in the formyl group of heme A. This chain is Heme A synthase, found in Staphylococcus haemolyticus (strain JCSC1435).